We begin with the raw amino-acid sequence, 217 residues long: UPF0323 lipoprotein HPSH_01205 (217 aa).

A signal peptide spans 1-27; that stretch reads MKKPYRKISDYAIVGGLSALVMVSIVG. Residue Cys-28 is the site of N-palmitoyl cysteine attachment. Residue Cys-28 is the site of S-diacylglycerol cysteine attachment. Positions 160 to 171 are enriched in polar residues; that stretch reads QRTYKSPQAYQR. The tract at residues 160–217 is disordered; it reads QRTYKSPQAYQRSQNSFSKSAPSASSMGGASKGQSGFFGSSRPTSSPAVSSGTRGFNS. Over residues 172–210 the composition is skewed to low complexity; it reads SQNSFSKSAPSASSMGGASKGQSGFFGSSRPTSSPAVSS.

It belongs to the UPF0323 family.

Its subcellular location is the cell membrane. This is UPF0323 lipoprotein HPSH_01205 from Helicobacter pylori (strain Shi470).